A 120-amino-acid chain; its full sequence is Flagellar protein FliT (120 aa).

Residues 1-50 are required for homodimerization; that stretch reads MERHQHLLSEYQQILTLSEQMLVLATEGNWDALVDLEMTYLKAVESTANI. A fliD binding region spans residues 60 to 98; that stretch reads LQDLLREKLRAILDNEIEIKRLLQLRLDRLSDLVGQSTK.

The protein belongs to the FliT family. In terms of assembly, homodimer. Interacts with FliD and FlhC.

It localises to the cytoplasm. Its subcellular location is the cytosol. Functionally, dual-function protein that regulates the transcription of class 2 flagellar operons and that also acts as an export chaperone for the filament-capping protein FliD. As a transcriptional regulator, acts as an anti-FlhDC factor; it directly binds FlhC, thus inhibiting the binding of the FlhC/FlhD complex to class 2 promoters, resulting in decreased expression of class 2 flagellar operons. As a chaperone, effects FliD transition to the membrane by preventing its premature polymerization, and by directing it to the export apparatus. This chain is Flagellar protein FliT, found in Yersinia enterocolitica serotype O:8 / biotype 1B (strain NCTC 13174 / 8081).